The chain runs to 702 residues: Choline transporter-like protein 5-A (702 aa).

A helical membrane pass occupies residues 21–41; it reads VLCCVLFVIVILGYIALGTVA. The Extracellular portion of the chain corresponds to 42-225; it reads WIHGDPRKVI…KIVEDYASCW (184 aa). N-linked (GlcNAc...) asparagine glycosylation is found at Asn120, Asn173, and Asn180. Residues 226–246 form a helical membrane-spanning segment; it reads YWIVIGLFIALVISLIFILLL. The Cytoplasmic segment spans residues 247–249; sequence RFT. A helical transmembrane segment spans residues 250–270; that stretch reads AGFLLWFIIFAVILLVAYGIW. Residues 271–308 lie on the Extracellular side of the membrane; that stretch reads HCYWEFAVLRETPGADVTISDIGFQTDLHVYLQLSQTW. The chain crosses the membrane as a helical span at residues 309 to 329; that stretch reads LVFMVTLGLTEASIVLMLIFL. The Cytoplasmic portion of the chain corresponds to 330 to 334; sequence RKRVR. The chain crosses the membrane as a helical span at residues 335–355; the sequence is IAIALLREGSRAISYIMSALF. Residues 356–357 lie on the Extracellular side of the membrane; that stretch reads YP. The chain crosses the membrane as a helical span at residues 358–378; sequence IITFVLLAICISYWAMTALFL. Residues 379-443 are Cytoplasmic-facing; that stretch reads ASSGDAVYKV…RYIFILQLCN (65 aa). The helical transmembrane segment at 444 to 464 threads the bilayer; the sequence is LLVFLWLVNFTIALGQCTVAG. The Extracellular portion of the chain corresponds to 465 to 498; that stretch reads AFASYYWARRKPADIPPCPVFSSFSRALRYHTGS. The helical transmembrane segment at 499-519 threads the bilayer; it reads LAFGSLILAVVQLIRVILEYL. The Cytoplasmic segment spans residues 520 to 593; it reads DHKLKGAHNA…RVAVLDKVTD (74 aa). The chain crosses the membrane as a helical span at residues 594–614; sequence FLLFLGKLLIAGSVGVIAFFL. At 615 to 632 the chain is on the extracellular side; the sequence is FTRKIPIIQEEVPVLNYY. A helical membrane pass occupies residues 633-653; the sequence is CVPLLTVILGSYLIAHSFFSV. The Cytoplasmic segment spans residues 654–699; that stretch reads YAMCVDTLFLCFCEDLERNDGTTAKPFFMSPGLKRILGKAEQSPKK.

It belongs to the CTL (choline transporter-like) family.

The protein localises to the cell membrane. The enzyme catalyses choline(out) + n H(+)(in) = choline(in) + n H(+)(out). In terms of biological role, choline/H+ antiporter. This chain is Choline transporter-like protein 5-A (slc44a5a), found in Danio rerio (Zebrafish).